We begin with the raw amino-acid sequence, 177 residues long: NAD(P)H-quinone oxidoreductase subunit 6, chloroplastic (177 aa).

Helical transmembrane passes span 10–30 (VLLV…VLLT), 32–52 (PIYS…FYIL), 61–81 (AQLL…VMFM), 90–112 (FYLW…FSLI), and 152–172 (FYLP…GAIT).

This sequence belongs to the complex I subunit 6 family. NDH is composed of at least 16 different subunits, 5 of which are encoded in the nucleus.

It is found in the plastid. The protein resides in the chloroplast thylakoid membrane. It catalyses the reaction a plastoquinone + NADH + (n+1) H(+)(in) = a plastoquinol + NAD(+) + n H(+)(out). It carries out the reaction a plastoquinone + NADPH + (n+1) H(+)(in) = a plastoquinol + NADP(+) + n H(+)(out). Functionally, NDH shuttles electrons from NAD(P)H:plastoquinone, via FMN and iron-sulfur (Fe-S) centers, to quinones in the photosynthetic chain and possibly in a chloroplast respiratory chain. The immediate electron acceptor for the enzyme in this species is believed to be plastoquinone. Couples the redox reaction to proton translocation, and thus conserves the redox energy in a proton gradient. This Acorus calamus var. americanus (American sweet flag) protein is NAD(P)H-quinone oxidoreductase subunit 6, chloroplastic (ndhG).